Consider the following 365-residue polypeptide: UDP-N-acetylglucosamine--N-acetylmuramyl-(pentapeptide) pyrophosphoryl-undecaprenol N-acetylglucosamine transferase (365 aa).

UDP-N-acetyl-alpha-D-glucosamine-binding positions include 10–12 (TGG), N128, R170, S199, I250, and Q295.

It belongs to the glycosyltransferase 28 family. MurG subfamily.

It localises to the cell inner membrane. It carries out the reaction di-trans,octa-cis-undecaprenyl diphospho-N-acetyl-alpha-D-muramoyl-L-alanyl-D-glutamyl-meso-2,6-diaminopimeloyl-D-alanyl-D-alanine + UDP-N-acetyl-alpha-D-glucosamine = di-trans,octa-cis-undecaprenyl diphospho-[N-acetyl-alpha-D-glucosaminyl-(1-&gt;4)]-N-acetyl-alpha-D-muramoyl-L-alanyl-D-glutamyl-meso-2,6-diaminopimeloyl-D-alanyl-D-alanine + UDP + H(+). The protein operates within cell wall biogenesis; peptidoglycan biosynthesis. Its function is as follows. Cell wall formation. Catalyzes the transfer of a GlcNAc subunit on undecaprenyl-pyrophosphoryl-MurNAc-pentapeptide (lipid intermediate I) to form undecaprenyl-pyrophosphoryl-MurNAc-(pentapeptide)GlcNAc (lipid intermediate II). In Prosthecochloris aestuarii (strain DSM 271 / SK 413), this protein is UDP-N-acetylglucosamine--N-acetylmuramyl-(pentapeptide) pyrophosphoryl-undecaprenol N-acetylglucosamine transferase.